The chain runs to 191 residues: ATP-dependent dethiobiotin synthetase BioD 2 (191 aa).

Position 13–18 (13–18) interacts with ATP; it reads DVGKTI. T17 contributes to the Mg(2+) binding site. K38 is an active-site residue. Substrate is bound at residue T42. ATP is bound by residues D50 and 115 to 118; that span reads EGAG. Positions 50 and 115 each coordinate Mg(2+).

Belongs to the dethiobiotin synthetase family. Homodimer. Mg(2+) is required as a cofactor.

Its subcellular location is the cytoplasm. The catalysed reaction is (7R,8S)-7,8-diammoniononanoate + CO2 + ATP = (4R,5S)-dethiobiotin + ADP + phosphate + 3 H(+). Its pathway is cofactor biosynthesis; biotin biosynthesis; biotin from 7,8-diaminononanoate: step 1/2. Catalyzes a mechanistically unusual reaction, the ATP-dependent insertion of CO2 between the N7 and N8 nitrogen atoms of 7,8-diaminopelargonic acid (DAPA, also called 7,8-diammoniononanoate) to form a ureido ring. In Haemophilus influenzae (strain ATCC 51907 / DSM 11121 / KW20 / Rd), this protein is ATP-dependent dethiobiotin synthetase BioD 2.